Reading from the N-terminus, the 395-residue chain is Tryptophan synthase beta chain (395 aa).

An N6-(pyridoxal phosphate)lysine modification is found at Lys86.

This sequence belongs to the TrpB family. As to quaternary structure, tetramer of two alpha and two beta chains. Pyridoxal 5'-phosphate is required as a cofactor.

It carries out the reaction (1S,2R)-1-C-(indol-3-yl)glycerol 3-phosphate + L-serine = D-glyceraldehyde 3-phosphate + L-tryptophan + H2O. It participates in amino-acid biosynthesis; L-tryptophan biosynthesis; L-tryptophan from chorismate: step 5/5. The beta subunit is responsible for the synthesis of L-tryptophan from indole and L-serine. This is Tryptophan synthase beta chain from Psychromonas ingrahamii (strain DSM 17664 / CCUG 51855 / 37).